Consider the following 163-residue polypeptide: Transcription antitermination protein NusB (163 aa).

Positions 1–21 are disordered; that stretch reads MTTFLSDSEHPQDVKAPPKSA.

It belongs to the NusB family.

Its function is as follows. Involved in transcription antitermination. Required for transcription of ribosomal RNA (rRNA) genes. Binds specifically to the boxA antiterminator sequence of the ribosomal RNA (rrn) operons. In Dechloromonas aromatica (strain RCB), this protein is Transcription antitermination protein NusB.